Consider the following 357-residue polypeptide: uncharacterized protein (357 aa).

Helical transmembrane passes span 13–33 (PVTG…TYLV), 44–64 (IACT…CAVY), 72–92 (VSTF…TCFL), 148–168 (VLTY…FCFV), 181–201 (LPIS…SGFF), 203–223 (YLFI…LGIW), 266–286 (IALT…SALF), 293–313 (SISG…PFLI), and 327–347 (YWVL…VVLL).

It localises to the mitochondrion membrane. This is an uncharacterized protein from Schizosaccharomyces pombe (strain 972 / ATCC 24843) (Fission yeast).